We begin with the raw amino-acid sequence, 91 residues long: Probable Fe(2+)-trafficking protein (91 aa).

It belongs to the Fe(2+)-trafficking protein family.

Could be a mediator in iron transactions between iron acquisition and iron-requiring processes, such as synthesis and/or repair of Fe-S clusters in biosynthetic enzymes. The protein is Probable Fe(2+)-trafficking protein of Mannheimia succiniciproducens (strain KCTC 0769BP / MBEL55E).